The chain runs to 365 residues: Peptide chain release factor 2 (365 aa).

N5-methylglutamine is present on Gln252.

The protein belongs to the prokaryotic/mitochondrial release factor family. Methylated by PrmC. Methylation increases the termination efficiency of RF2.

It localises to the cytoplasm. Its function is as follows. Peptide chain release factor 2 directs the termination of translation in response to the peptide chain termination codons UGA and UAA. This is Peptide chain release factor 2 from Acidithiobacillus ferrooxidans (strain ATCC 23270 / DSM 14882 / CIP 104768 / NCIMB 8455) (Ferrobacillus ferrooxidans (strain ATCC 23270)).